Here is a 344-residue protein sequence, read N- to C-terminus: GLIPR1-like protein 2 (344 aa).

The 135-residue stretch at Val-58 to Tyr-192 folds into the SCP domain. The chain crosses the membrane as a helical span at residues Thr-254 to Val-274. Acidic residues-rich tracts occupy residues Glu-292–Glu-304 and Glu-312–Thr-334. The segment at Glu-292 to Lys-344 is disordered. Over residues Gln-335–Lys-344 the composition is skewed to basic and acidic residues.

The protein belongs to the CRISP family. In terms of tissue distribution, highly expressed in testis. Detected in prostate, kidney, bladder, lung and bone marrow.

It is found in the membrane. The polypeptide is GLIPR1-like protein 2 (GLIPR1L2) (Homo sapiens (Human)).